The primary structure comprises 590 residues: Probable serine/threonine-protein phosphatase PP2A regulatory subunit (590 aa).

HEAT repeat units follow at residues 37–73 (LSTIALALGVERTRNELIQFLTDTIYDEDEVLLVLAE), 74–111 (QLGNFTPLVGGPDHVHCLLLPLENLATVEETVVRDKAV), 113–150 (SLRKIADKHSSASLEEHFVPMLRRLATGDWFTSRTSAC), 151–188 (GLFSVVYPRVSPAIKSELKSMFRTLCRDDTPMVRRAAA), 189–227 (AKLGEFAKVFEKTAVIEGLHSSLTDLHVDEQDSVRLLTV), 228–266 (ESAIAFGTLLDKANKKKLIEPILIELFDDKSWRVRYMVA), 267–305 (EKLIEIQNVLGEDMDTTHLVNMYTNLLKDPEGEVRCAAT), 306–344 (QRLQEFALNLPEDKRQNIICNSLLNVAKELVTDGNQLVK), 349–387 (GVIMGLAPLIGKEQTVSELLPIYMQLLNDQTPEVRLNII), 388–426 (SSLDKVNEVIGAAQLSTSLLPAIVGLAEDGKWRVRLAIV), 427–465 (QFMPLLASQLGQEFFDEKLLPLCLNWLTDHVFSIREAST), 466–504 (LIMKELTQKFGGQWASTNIVPKMQKLQKDTNYLQRMTCL), 505–543 (FCLNTLSEAMTQEQILKEIMPIVKDLVEDDVPNVRFNAA), and 544–582 (KSLKRIGKNLTPSTLTSEVKPLLEKLGKDSDFDVRYFSE).

It belongs to the phosphatase 2A regulatory subunit A family. As to quaternary structure, part of a complex consisting of a common heterodimeric core enzyme, composed of catalytic subunit let-92 and constant regulatory subunit paa-1, that associates with a variety of regulatory subunits which confer distinct properties to the holoenzyme. Interacts with rsa-1.

It localises to the cytoplasm. The protein resides in the cytoskeleton. The protein localises to the microtubule organizing center. Its subcellular location is the centrosome. It is found in the spindle. Its function is as follows. Acts as a scaffolding protein for phosphatase let-92 and its regulatory subunits. Probably together with let-92 and regulatory subunit sur-6, regulates centriole duplication, microtubule outgrowth and mitotic spindle stability during early embryonic cell division by preventing the degradation of sas-5 and kinase zyg-1. During vulva development, may play a role with phosphatase let-92 and regulatory subunit sur-6 in the induction of vulva cell precursors by positively regulating let-60/Ras-MAP kinase signaling, probably by promoting lin-45 activation. Plays a positive role in axon guidance probably by inhibiting phosphatase let-92. The chain is Probable serine/threonine-protein phosphatase PP2A regulatory subunit (paa-1) from Caenorhabditis elegans.